Consider the following 453-residue polypeptide: Regulatory protein opaque-2 (453 aa).

The disordered stretch occupies residues 145-243; the sequence is SSVVTSDQRS…SNRESARRSR (99 aa). Residues 146 to 175 show a composition bias toward polar residues; sequence SVVTSDQRSQGSNNHTGGSSIRNNPVQNKL. The span at 207–216 shows a compositional bias: acidic residues; that stretch reads PSDEDMDGEV. Residues 224–240 are compositionally biased toward basic and acidic residues; it reads PTEERVRKKESNRESAR. Residues 225 to 288 enclose the bZIP domain; the sequence is TEERVRKKES…NDANVDNRVL (64 aa). The basic motif stretch occupies residues 228–251; the sequence is RVRKKESNRESARRSRYRKAAHLK. The tract at residues 253–274 is leucine-zipper; that stretch reads LEDQVAQLKAENSCLLRRIAAL.

Belongs to the bZIP family. In terms of assembly, interacts with the Dof zinc finger protein PBF. In terms of tissue distribution, seed endosperm.

The protein localises to the nucleus. In terms of biological role, involved in the regulation of the endosperm-specific production of albumin b-32 and other zein proteins. It is a trans-acting transcriptional activator that binds to the consensus sequence 5'-GATGAYRTGR-3'. This Zea mays (Maize) protein is Regulatory protein opaque-2 (O2).